Here is a 367-residue protein sequence, read N- to C-terminus: Alginate lyase (367 aa).

The signal sequence occupies residues 1-24 (MTIINRKTAPALLALALFGGAAQA). Residues 63–64 (SK), 136–137 (HT), and Y254 each bind substrate.

Belongs to the polysaccharide lyase 5 family.

It localises to the periplasm. It carries out the reaction Eliminative cleavage of alginate to give oligosaccharides with 4-deoxy-alpha-L-erythro-hex-4-enuronosyl groups at their non-reducing ends and beta-D-mannuronate at their reducing end.. In terms of biological role, catalyzes the depolymerization of alginate by cleaving the beta-1,4 glycosidic bond between two adjacent sugar residues via a beta-elimination mechanism. May serve to degrade mislocalized alginate that is trapped in the periplasmic space. The chain is Alginate lyase from Pseudomonas entomophila (strain L48).